The sequence spans 551 residues: Cilia- and flagella-associated protein 45 (551 aa).

Disordered regions lie at residues Met-1–Val-30 and Arg-461–Glu-489. A coiled-coil region spans residues Asn-157–Arg-526.

This sequence belongs to the CFAP45 family. In terms of assembly, microtubule inner protein component of sperm flagellar doublet microtubules. Interacts with AK8; dimerization with AK8 may create a cavity at the interface of the dimer that can accommodate AMP. Interacts with CFAP52. Interacts with ENKUR. Directly interacts with DNALI1. Interacts with DNAH11. Interacts with DNAI1. In terms of tissue distribution, expressed in respiratory cells and in sperm (at protein level). Expressed in nasopharyngeal epithelium and trachea.

The protein resides in the cytoplasm. The protein localises to the cytoskeleton. Its subcellular location is the cilium axoneme. It is found in the flagellum axoneme. It localises to the cell projection. The protein resides in the cilium. The protein localises to the flagellum. Microtubule inner protein (MIP) part of the dynein-decorated doublet microtubules (DMTs) in cilia axoneme, which is required for motile cilia beating. It is an AMP-binding protein that may facilitate dynein ATPase-dependent ciliary and flagellar beating via adenine nucleotide homeostasis. May function as a donor of AMP to AK8 and hence promote ADP production. The chain is Cilia- and flagella-associated protein 45 from Homo sapiens (Human).